Consider the following 520-residue polypeptide: NAD(P)H-quinone oxidoreductase subunit 2 (520 aa).

Transmembrane regions (helical) follow at residues 15 to 35, 42 to 62, 79 to 99, 106 to 126, 132 to 152, 167 to 187, 210 to 230, 244 to 264, 280 to 300, 306 to 326, 334 to 354, 378 to 398, 400 to 420, and 466 to 486; these read ILPEGIVIVTLMGVLIVDLIL, WIGYLAIAGLLAAIVALYFQW, LSIIFRGIIALSAVVTILMSI, GTALAEFIAILLTATLGGMFV, LVMIFISLETLSISSYLLTGY, LLIGASSTAVFLYGVSLLYGL, LGAVIALVFVIAGIGFKISAA, PTPVIAFLSVGSKAAGFALAI, FVFTALAVLSMILGNVVALAQ, MLAYSSIAQAGFVMIGLIAGT, IFYLLVYLFMNLCGFTCIILF, LGLSISLLSLGGIPPLAGFFG, IYLFWAGWQAGLYWLVLLGLV, and VGLVLTLIATSVAGILSNPLF.

The protein belongs to the complex I subunit 2 family. As to quaternary structure, NDH-1 can be composed of about 15 different subunits; different subcomplexes with different compositions have been identified which probably have different functions.

The protein localises to the cellular thylakoid membrane. The catalysed reaction is a plastoquinone + NADH + (n+1) H(+)(in) = a plastoquinol + NAD(+) + n H(+)(out). The enzyme catalyses a plastoquinone + NADPH + (n+1) H(+)(in) = a plastoquinol + NADP(+) + n H(+)(out). Functionally, NDH-1 shuttles electrons from an unknown electron donor, via FMN and iron-sulfur (Fe-S) centers, to quinones in the respiratory and/or the photosynthetic chain. The immediate electron acceptor for the enzyme in this species is believed to be plastoquinone. Couples the redox reaction to proton translocation, and thus conserves the redox energy in a proton gradient. Cyanobacterial NDH-1 also plays a role in inorganic carbon-concentration. This Nostoc sp. (strain PCC 7120 / SAG 25.82 / UTEX 2576) protein is NAD(P)H-quinone oxidoreductase subunit 2.